The chain runs to 367 residues: Flagellin 2 (367 aa).

Belongs to the bacterial flagellin family.

The protein resides in the secreted. It localises to the bacterial flagellum. Flagellin is the subunit protein which polymerizes to form the filaments of bacterial flagella. This chain is Flagellin 2 (fliC2), found in Proteus mirabilis.